A 366-amino-acid chain; its full sequence is 5-hydroxytryptamine receptor 1F (366 aa).

The Extracellular segment spans residues 1-24 (MDFLNASDQNLTSEELLNRMPSKI). 2 N-linked (GlcNAc...) asparagine glycosylation sites follow: Asn5 and Asn10. The helical transmembrane segment at 25–49 (LVSLTLSGLALMTTTINSLVIAAII) threads the bilayer. At 50-59 (VTRKLHHPAN) the chain is on the cytoplasmic side. A helical transmembrane segment spans residues 60-81 (YLICSLAVTDFLVAVLVMPFSI). Topologically, residues 82–96 (VYIVRESWIMGQVLC) are extracellular. Cys96 and Cys172 form a disulfide bridge. The helical transmembrane segment at 97-119 (DIWLSVDIICCTCSILHLSAIAL) threads the bilayer. Asp103 and Cys107 together coordinate serotonin. The DRY motif; important for ligand-induced conformation changes motif lies at 120 to 122 (DRY). The Cytoplasmic segment spans residues 120–139 (DRYRAITDAVEYARKRTPRH). The chain crosses the membrane as a helical span at residues 140–159 (AGIMITIVWVISVFISMPPL). At 160 to 178 (FWRHQGTSRDDECVIKHDH) the chain is on the extracellular side. A helical membrane pass occupies residues 179–202 (IVSTIYSTFGAFYIPLVLILILYY). At 203–291 (KIYRAARTLY…KISGTRERKA (89 aa)) the chain is on the cytoplasmic side. Residues 292 to 315 (ATTLGLILGAFVICWLPFFVKELV) form a helical membrane-spanning segment. The Extracellular segment spans residues 316–327 (VNVCEKCKISEE). A helical membrane pass occupies residues 328-350 (MSNFLAWLGYLNSLINPLIYTIF). The NPxxY motif; important for ligand-induced conformation changes and signaling motif lies at 343–347 (NPLIY). Residues 351 to 366 (NEDFKKAFQKLVRCRY) are Cytoplasmic-facing.

This sequence belongs to the G-protein coupled receptor 1 family. In terms of tissue distribution, detected in hippocampus.

It localises to the cell membrane. Its function is as follows. G-protein coupled receptor for 5-hydroxytryptamine (serotonin). Also functions as a receptor for various alkaloids and psychoactive substances. Ligand binding causes a conformation change that triggers signaling via guanine nucleotide-binding proteins (G proteins) and modulates the activity of downstream effectors, such as adenylate cyclase. HTR1F is coupled to G(i)/G(o) G alpha proteins and mediates inhibitory neurotransmission by inhibiting adenylate cyclase activity. The sequence is that of 5-hydroxytryptamine receptor 1F (Htr1f) from Mus musculus (Mouse).